The following is a 185-amino-acid chain: MKNVTDSFVSLGHWPSAGGFGFNTDILATNPINLSVVLGVLIFFGKGVLSDLLDNRKQRILNTIRNSEELREGAIEQLEKARARLRKVEMEADQYRVNGYSEIEREKLNLINSTYNTLEQLENYKNETIHFEQQRAINQVRQRVLQQALQGALGTINSCLNKELHLRTISANIGMFGSMKEIRNN.

A helical transmembrane segment spans residues L27 to L49.

Belongs to the ATPase B chain family. As to quaternary structure, F-type ATPases have 2 components, F(1) - the catalytic core - and F(0) - the membrane proton channel. F(1) has five subunits: alpha(3), beta(3), gamma(1), delta(1), epsilon(1). F(0) has four main subunits: a(1), b(1), b'(1) and c(10-14). The alpha and beta chains form an alternating ring which encloses part of the gamma chain. F(1) is attached to F(0) by a central stalk formed by the gamma and epsilon chains, while a peripheral stalk is formed by the delta, b and b' chains.

The protein localises to the plastid. The protein resides in the chloroplast thylakoid membrane. Functionally, f(1)F(0) ATP synthase produces ATP from ADP in the presence of a proton or sodium gradient. F-type ATPases consist of two structural domains, F(1) containing the extramembraneous catalytic core and F(0) containing the membrane proton channel, linked together by a central stalk and a peripheral stalk. During catalysis, ATP synthesis in the catalytic domain of F(1) is coupled via a rotary mechanism of the central stalk subunits to proton translocation. Component of the F(0) channel, it forms part of the peripheral stalk, linking F(1) to F(0). This Vitis vinifera (Grape) protein is ATP synthase subunit b, chloroplastic.